Here is a 150-residue protein sequence, read N- to C-terminus: Histone H2A.1 (150 aa).

Met-1 carries the post-translational modification N-acetylmethionine. Composition is skewed to basic residues over residues Met-1–Val-24 and Ser-141–Ala-150. 2 disordered regions span residues Met-1–Arg-26 and Arg-128–Ala-150. 2 consecutive short sequence motifs (SPKK motif) follow at residues Ser-139–Lys-142 and Ser-146–Lys-149.

The protein belongs to the histone H2A family. The nucleosome is a histone octamer containing two molecules each of H2A, H2B, H3 and H4 assembled in one H3-H4 heterotetramer and two H2A-H2B heterodimers. The octamer wraps approximately 147 bp of DNA. High expression in root meristematic tissues, moderate in whole shoot and very low in mature leaves.

It localises to the nucleus. Its subcellular location is the chromosome. In terms of biological role, core component of nucleosome. Nucleosomes wrap and compact DNA into chromatin, limiting DNA accessibility to the cellular machineries which require DNA as a template. Histones thereby play a central role in transcription regulation, DNA repair, DNA replication and chromosomal stability. DNA accessibility is regulated via a complex set of post-translational modifications of histones, also called histone code, and nucleosome remodeling. This chain is Histone H2A.1, found in Pisum sativum (Garden pea).